Consider the following 220-residue polypeptide: Small ribosomal subunit protein uS2 (220 aa).

The tract at residues 201-220 is disordered; it reads LPPDGDLPEPPSEFEVKFKR.

The protein belongs to the universal ribosomal protein uS2 family.

This is Small ribosomal subunit protein uS2 from Staphylothermus marinus (strain ATCC 43588 / DSM 3639 / JCM 9404 / F1).